Here is a 662-residue protein sequence, read N- to C-terminus: Serine/threonine-protein kinase PTK1/STK1 (662 aa).

A disordered region spans residues glycine 35 to serine 119. Residues serine 50–serine 60 are compositionally biased toward low complexity. 2 stretches are compositionally biased toward polar residues: residues proline 61–threonine 91 and glycine 98–serine 119. A Protein kinase domain is found at aspartate 196 to phenylalanine 503. ATP-binding positions include isoleucine 202–valine 210 and lysine 226. Residue aspartate 329 is the Proton acceptor of the active site. Residues threonine 605–histidine 631 form a disordered region.

It belongs to the protein kinase superfamily. Ser/Thr protein kinase family.

The catalysed reaction is L-seryl-[protein] + ATP = O-phospho-L-seryl-[protein] + ADP + H(+). The enzyme catalyses L-threonyl-[protein] + ATP = O-phospho-L-threonyl-[protein] + ADP + H(+). Essential determinant for low-affinity spermidine transport. In Saccharomyces cerevisiae (strain ATCC 204508 / S288c) (Baker's yeast), this protein is Serine/threonine-protein kinase PTK1/STK1 (PTK1).